Here is a 1820-residue protein sequence, read N- to C-terminus: Afadin (1820 aa).

A Ras-associating 1 domain is found at 39-133 (FHGVMRFYFQ…GRFVLKNEND (95 aa)). The tract at residues 129 to 196 (KNENDAIPAK…PSQGDDSENS (68 aa)) is disordered. A coiled-coil region spans residues 146–186 (EKQEKEGVIQNFKRTLSKKEKKEKKKKEKEALRQASDKEER). Positions 160–172 (TLSKKEKKEKKKK) are enriched in basic residues. Positions 173 to 189 (EKEALRQASDKEERPSQ) are enriched in basic and acidic residues. Phosphoserine is present on residues serine 216, serine 246, and serine 256. A Ras-associating 2 domain is found at 246–348 (SGGTLRIYAD…LVFQLKRRPP (103 aa)). Residues 356 to 371 (KKHVEGKSLKGKDRAD) are compositionally biased toward basic and acidic residues. The interval 356-377 (KKHVEGKSLKGKDRADGSGYGS) is disordered. 2 positions are modified to phosphoserine: serine 391 and serine 424. In terms of domain architecture, FHA spans 426–492 (TEVGTEKFDD…LQSGMRLQFG (67 aa)). Phosphoserine is present on residues serine 512, serine 557, serine 562, serine 655, serine 1083, serine 1107, serine 1126, serine 1140, serine 1143, serine 1172, serine 1173, serine 1182, and serine 1199. Positions 538-569 (GDVHSGTALPASRSTTRLDSDRVSSASSTAER) are disordered. The region spanning 653–908 (DISPTERTHK…IENVVAVAEN (256 aa)) is the Dilute domain. Residues 1007–1093 (IITVTLKKQN…VVTLEVAKQG (87 aa)) enclose the PDZ domain. The interval 1107–1194 (SPMMQRISDR…GKGPYTSGTA (88 aa)) is disordered. The segment covering 1113–1128 (ISDRRGSGKPRPKSEG) has biased composition (basic and acidic residues). Positions 1132–1143 (YNNSAQNGSPES) are enriched in polar residues. Residues 1152 to 1172 (SEPKKLPGDDRLMKNRADHRS) show a composition bias toward basic and acidic residues. Residues 1203-1222 (GNLCTEEQSPPPRPEAYPIP) are disordered. Phosphothreonine is present on threonine 1232. 3 disordered regions span residues 1235–1278 (ASKS…SQEE), 1308–1527 (QSSS…KQQQ), and 1567–1716 (RLQE…LKTQ). Serine 1238 bears the Phosphoserine mark. Basic and acidic residues predominate over residues 1252 to 1262 (YEEKPHVHTES). Serine 1275 carries the phosphoserine modification. Low complexity predominate over residues 1309 to 1318 (SSSVESSTSS). The span at 1325-1337 (SSKSVTPASTLTK) shows a compositional bias: polar residues. Serine 1328 is modified (phosphoserine). The residue at position 1330 (threonine 1330) is a Phosphothreonine. Pro residues predominate over residues 1364–1373 (LPPPPPPPPV). Basic and acidic residues predominate over residues 1407–1440 (EWKKREEHQRWYEKEKARLEEERERKRREQERKL). A coiled-coil region spans residues 1410–1446 (KREEHQRWYEKEKARLEEERERKRREQERKLGQMRSQ). The segment covering 1443-1457 (MRSQTLNPASFSPLA) has biased composition (polar residues). Over residues 1487 to 1503 (TIERKDLQYITISKEEL) the composition is skewed to basic and acidic residues. A phosphoserine mark is found at serine 1499 and serine 1510. Over residues 1513–1526 (PWKRDAREKLEKQQ) the composition is skewed to basic and acidic residues. Residues 1523-1561 (EKQQQMHIVDMLSKEIHELQNKVDRTAEESDRLRKLMLE) adopt a coiled-coil conformation. The span at 1576–1587 (EDDDEEEDDDVD) shows a compositional bias: acidic residues. The stretch at 1593 to 1665 (QRLEAERRAR…SRLEAERRRQ (73 aa)) forms a coiled coil. The span at 1595-1675 (LEAERRARMQ…HEEAARRLLE (81 aa)) shows a compositional bias: basic and acidic residues. A phosphoserine mark is found at serine 1694, serine 1719, serine 1770, and serine 1795. The tract at residues 1734–1820 (EEEDYGPAGP…TELENELNTK (87 aa)) is disordered. The segment covering 1759 to 1772 (APREAREKLTRSQD) has biased composition (basic and acidic residues). Basic and acidic residues predominate over residues 1800–1820 (VSDKVKASRKLTELENELNTK). Position 1803 is an N6-acetyllysine (lysine 1803).

As to quaternary structure, homodimer. Interacts with F-actin, nectin and NECTIN3. Essential for the association of nectin and E-cadherin. Isoform 2/s-afadin does not interact with F-actin. Interacts with ZO-1 and occludin, but probably in an indirect manner. Interacts with RIT1, RIT2, NRXN1 and BCR. Interacts with ADAM10; the interaction locks ADAM10 at adherens junctions following ADAM10 recruitment to adherens junctions by TSPAN33. Isoform 1 is expressed only in a restricted set of epithelial structures during early embryogenesis.

Its subcellular location is the cell junction. The protein resides in the adherens junction. In terms of biological role, belongs to an adhesion system, probably together with the E-cadherin-catenin system, which plays a role in the organization of homotypic, interneuronal and heterotypic cell-cell adherens junctions (AJs). Nectin- and actin-filament-binding protein that connects nectin to the actin cytoskeleton. May play a key role in the organization of epithelial structures of the embryonic ectoderm. Essential for the organization of adherens junctions. This is Afadin from Mus musculus (Mouse).